A 518-amino-acid polypeptide reads, in one-letter code: Probable cytochrome P450 317a1 (518 aa).

C461 provides a ligand contact to heme.

This sequence belongs to the cytochrome P450 family. The cofactor is heme.

The protein localises to the endoplasmic reticulum membrane. Its subcellular location is the microsome membrane. Its function is as follows. May be involved in the metabolism of insect hormones and in the breakdown of synthetic insecticides. The chain is Probable cytochrome P450 317a1 (Cyp317a1) from Drosophila melanogaster (Fruit fly).